Reading from the N-terminus, the 199-residue chain is Superoxide dismutase [Fe] (199 aa).

4 residues coordinate Fe cation: His27, His79, Asp161, and His165.

Belongs to the iron/manganese superoxide dismutase family. In terms of assembly, homodimer. Requires Fe cation as cofactor.

It catalyses the reaction 2 superoxide + 2 H(+) = H2O2 + O2. Functionally, destroys superoxide anion radicals which are normally produced within the cells and which are toxic to biological systems. The polypeptide is Superoxide dismutase [Fe] (sodB) (Synechocystis sp. (strain ATCC 27184 / PCC 6803 / Kazusa)).